The following is a 243-amino-acid chain: DUF724 domain-containing protein 5 (243 aa).

Positions 1-24 (MREKHYSEDNSRKRKRGELEHNSD) are enriched in basic and acidic residues. A disordered region spans residues 1–51 (MREKHYSEDNSRKRKRGELEHNSDLNETVLPSDWTPDPVKNFAADDDDEET). Residues 59 to 243 (VLPFVKKSPV…DLGVELEDVE (185 aa)) enclose the DUF724 domain. Positions 174–223 (KEMKDESSKKHKAEQEFGEMERKILEVKNKVLELQKQEAALEKQKDATYE) form a coiled coil.

As to quaternary structure, homodimer. In terms of tissue distribution, expressed in leaves, flowers and siliques.

Its subcellular location is the nucleus. In terms of biological role, may be involved in the polar growth of plant cells via transportation of RNAs. The protein is DUF724 domain-containing protein 5 of Arabidopsis thaliana (Mouse-ear cress).